Consider the following 594-residue polypeptide: MATPYPRSGGRGEVKCGGGRGAGVPWDFLPGLMVKAPPGPCLQAQRKEKSRNAARWRRGKENLEFFELAKLLPLPGAISSQLDKASIVRLSVTYLRLRRFAALGAPPWGLRAVGPPAGLAPGRRGPVALVSEVFEQHLGGHILQSLDGFVFALNQEGKFLYISETVSIYLGLSQVELTGSSVFDYIHPGDHSEVLEQLGLRAASIGPPTPPSVSSSSSSSSSSLVDTPEIEASPTEASPAFRAQERSFFVRMKSTLTKRGLNVKASGYKVIHVTGRLRARALGLVALGHTLPPAPLAELPLHGHMIVFRLSLGLTILACESRVSDHMDMGPSELVGRSCYQFVHGQDATRIRQSHLDLLDKGQVVTGYYRWLQRAGGFVWLQSVATVAGNGKSTGEHHVLWVSHVLSNAEGSQTPLDAFQLPAIVSQEEPSRPGPEPTEEEPPVDGKQAVPADQDKDKDPQARGKRIKVEASPKEARGSEDSGEEELSDPPAPPRPEFTSVIRAGALKHDPVLPWGLTTPGDPSPALLHAGFLPPVVRGLCTPGTIRYGPAELSLMYPHLHRLGAGPSLPEAFYPTLGLPYPGPTGTRVQRKGD.

Residues 45–98 (QRKEKSRNAARWRRGKENLEFFELAKLLPLPGAISSQLDKASIVRLSVTYLRLR) enclose the bHLH domain. The PAS 1 domain maps to 135-205 (EQHLGGHILQ…EQLGLRAASI (71 aa)). The tract at residues 206 to 237 (GPPTPPSVSSSSSSSSSSLVDTPEIEASPTEA) is disordered. Positions 212–223 (SVSSSSSSSSSS) are enriched in low complexity. A PAS 2 domain is found at 294–360 (APLAELPLHG…IRQSHLDLLD (67 aa)). A PAC domain is found at 366–409 (TGYYRWLQRAGGFVWLQSVATVAGNGKSTGEHHVLWVSHVLSNA). Residues 427-498 (QEEPSRPGPE…DPPAPPRPEF (72 aa)) form a disordered region. The segment covering 453 to 480 (DQDKDKDPQARGKRIKVEASPKEARGSE) has biased composition (basic and acidic residues).

As to quaternary structure, efficient DNA binding requires dimerization with another bHLH protein. Interacts with ARNT; forms a heterodimer that binds core DNA sequence 5'-[AG]CGTG-3' within the hypoxia response element (HRE) leading to a transcriptional repressor on its target gene TH. In terms of tissue distribution, expressed in brain in inhibitory interneurons. Also found in spinal cord.

The protein localises to the nucleus. May control regulatory pathways relevant to schizophrenia and to psychotic illness. May play a role in late central nervous system development by modulating EPO expression in response to cellular oxygen level. Forms a heterodimer that binds core DNA sequence 5'-TACGTG-3' within the hypoxia response element (HRE) leading to transcriptional repression on its target gene TH. In Mus musculus (Mouse), this protein is Neuronal PAS domain-containing protein 1 (Npas1).